Reading from the N-terminus, the 412-residue chain is Multifunctional CCA protein (412 aa).

Residues Gly8 and Arg11 each coordinate ATP. CTP is bound by residues Gly8 and Arg11. Residues Asp21 and Asp23 each coordinate Mg(2+). Residues Arg91, Arg137, and Arg140 each contribute to the ATP site. CTP is bound by residues Arg91, Arg137, and Arg140. Residues 228 to 329 (TGIHTLMTLS…VKLFDSIDAW (102 aa)) form the HD domain.

This sequence belongs to the tRNA nucleotidyltransferase/poly(A) polymerase family. Bacterial CCA-adding enzyme type 1 subfamily. As to quaternary structure, monomer. Can also form homodimers and oligomers. Requires Mg(2+) as cofactor. Ni(2+) is required as a cofactor.

It carries out the reaction a tRNA precursor + 2 CTP + ATP = a tRNA with a 3' CCA end + 3 diphosphate. The catalysed reaction is a tRNA with a 3' CCA end + 2 CTP + ATP = a tRNA with a 3' CCACCA end + 3 diphosphate. In terms of biological role, catalyzes the addition and repair of the essential 3'-terminal CCA sequence in tRNAs without using a nucleic acid template. Adds these three nucleotides in the order of C, C, and A to the tRNA nucleotide-73, using CTP and ATP as substrates and producing inorganic pyrophosphate. tRNA 3'-terminal CCA addition is required both for tRNA processing and repair. Also involved in tRNA surveillance by mediating tandem CCA addition to generate a CCACCA at the 3' terminus of unstable tRNAs. While stable tRNAs receive only 3'-terminal CCA, unstable tRNAs are marked with CCACCA and rapidly degraded. This chain is Multifunctional CCA protein, found in Escherichia coli O81 (strain ED1a).